The sequence spans 184 residues: Mitochondrial translation release factor in rescue (184 aa).

Residues 1-98 (MSSRSTWALL…HVPSGIVVKC (98 aa)) constitute a mitochondrion transit peptide. A GGQ domain region spans residues 60–124 (ESELEEQFVK…LQEKVDVFYN (65 aa)). A GGQ motif is present at residues 74–76 (GGQ). Residue Gln-76 is modified to N5-methylglutamine. Residues 130–178 (VHKEKLEAERRKRERKKRAKETLEKKKLLKELREASQNITEKKADADGI) are a coiled coil. A disordered region spans residues 132-184 (KEKLEAERRKRERKKRAKETLEKKKLLKELREASQNITEKKADADGIPRGFQE). A compositionally biased stretch (basic and acidic residues) spans 149-184 (KETLEKKKLLKELREASQNITEKKADADGIPRGFQE).

Belongs to the prokaryotic/mitochondrial release factor family. In terms of assembly, interacts (via C-terminus) with MTRES1 (via S4 domain). Associates with mitoribosomal S39 large subunit, peptidyl tRNA and nascent chain. In terms of processing, methylation of glutamine in the GGQ triplet by HEMK1.

It localises to the mitochondrion. Part of a mitoribosome-associated quality control pathway that prevents aberrant translation by responding to interruptions during elongation. As heterodimer with MTRES1, ejects the unfinished nascent chain and peptidyl transfer RNA (tRNA), respectively, from stalled ribosomes. Recruitment of mitoribosome biogenesis factors to these quality control intermediates suggests additional roles for MTRES1 and MTRF during mitoribosome rescue. The chain is Mitochondrial translation release factor in rescue from Mus musculus (Mouse).